Consider the following 231-residue polypeptide: LexA repressor (231 aa).

A DNA-binding region (H-T-H motif) is located at residues 26 to 46 (FDEMKDALDLRSKSGIHRLIT). Active-site for autocatalytic cleavage activity residues include S152 and K190.

It belongs to the peptidase S24 family. In terms of assembly, homodimer.

It carries out the reaction Hydrolysis of Ala-|-Gly bond in repressor LexA.. In terms of biological role, represses a number of genes involved in the response to DNA damage (SOS response), including recA and lexA. In the presence of single-stranded DNA, RecA interacts with LexA causing an autocatalytic cleavage which disrupts the DNA-binding part of LexA, leading to derepression of the SOS regulon and eventually DNA repair. This chain is LexA repressor, found in Bradyrhizobium diazoefficiens (strain JCM 10833 / BCRC 13528 / IAM 13628 / NBRC 14792 / USDA 110).